The following is a 410-amino-acid chain: Multifunctional CCA protein (410 aa).

The ATP site is built by G8 and R11. CTP contacts are provided by G8 and R11. Residues E21 and D23 each coordinate Mg(2+). Residues R91, R137, and R140 each coordinate ATP. CTP is bound by residues R91, R137, and R140. An HD domain is found at 228–329 (TGIHVMMALR…LKLFDRLDVW (102 aa)).

Belongs to the tRNA nucleotidyltransferase/poly(A) polymerase family. Bacterial CCA-adding enzyme type 1 subfamily. As to quaternary structure, monomer. Can also form homodimers and oligomers. It depends on Mg(2+) as a cofactor. Ni(2+) is required as a cofactor.

The catalysed reaction is a tRNA precursor + 2 CTP + ATP = a tRNA with a 3' CCA end + 3 diphosphate. The enzyme catalyses a tRNA with a 3' CCA end + 2 CTP + ATP = a tRNA with a 3' CCACCA end + 3 diphosphate. Functionally, catalyzes the addition and repair of the essential 3'-terminal CCA sequence in tRNAs without using a nucleic acid template. Adds these three nucleotides in the order of C, C, and A to the tRNA nucleotide-73, using CTP and ATP as substrates and producing inorganic pyrophosphate. tRNA 3'-terminal CCA addition is required both for tRNA processing and repair. Also involved in tRNA surveillance by mediating tandem CCA addition to generate a CCACCA at the 3' terminus of unstable tRNAs. While stable tRNAs receive only 3'-terminal CCA, unstable tRNAs are marked with CCACCA and rapidly degraded. The protein is Multifunctional CCA protein of Tolumonas auensis (strain DSM 9187 / NBRC 110442 / TA 4).